We begin with the raw amino-acid sequence, 507 residues long: Extracellular elastase (507 aa).

An N-terminal signal peptide occupies residues 1–28; the sequence is MKNFSKFALTSIAALTVASPLVNTEVDA. Residues 29–207 constitute a propeptide that is removed on maturation; the sequence is KDKVSATQNI…VVDKLNMIKE (179 aa). Asp-347 contacts Ca(2+). Residue His-351 coordinates Zn(2+). The active site involves Glu-352. Zn(2+)-binding residues include His-355 and Glu-375. Residues Asp-386, Glu-388, Asp-389, Leu-391, Glu-394, Tyr-397, Thr-398, Val-401, and Asp-404 each coordinate Ca(2+). His-435 serves as the catalytic Proton donor.

This sequence belongs to the peptidase M4 family. It depends on Ca(2+) as a cofactor. Zn(2+) is required as a cofactor.

It is found in the secreted. Protease that has a low substrate specificity. Glucagon is preferentially cleaved between aromatic (Phe) and hydrophobic (Val) amino acids. Hydrolyzes casein and elastin. In Staphylococcus epidermidis (strain ATCC 12228 / FDA PCI 1200), this protein is Extracellular elastase (sepA).